The primary structure comprises 196 residues: Holliday junction branch migration complex subunit RuvA (196 aa).

The interval 1–63 (MYDYIKGKLS…DDAHLLFGFH (63 aa)) is domain I. Residues 64-142 (TENEKEIFLN…EASGESATSR (79 aa)) form a domain II region. Positions 143 to 148 (KVSSEQ) are flexible linker. The segment at 148–196 (QNSNLEEAMEALLALGYKATELKKVKAFFEGTNETVEQYIKSSLKMLMK) is domain III.

Belongs to the RuvA family. In terms of assembly, homotetramer. Forms an RuvA(8)-RuvB(12)-Holliday junction (HJ) complex. HJ DNA is sandwiched between 2 RuvA tetramers; dsDNA enters through RuvA and exits via RuvB. An RuvB hexamer assembles on each DNA strand where it exits the tetramer. Each RuvB hexamer is contacted by two RuvA subunits (via domain III) on 2 adjacent RuvB subunits; this complex drives branch migration. In the full resolvosome a probable DNA-RuvA(4)-RuvB(12)-RuvC(2) complex forms which resolves the HJ.

The protein resides in the cytoplasm. Its function is as follows. The RuvA-RuvB-RuvC complex processes Holliday junction (HJ) DNA during genetic recombination and DNA repair, while the RuvA-RuvB complex plays an important role in the rescue of blocked DNA replication forks via replication fork reversal (RFR). RuvA specifically binds to HJ cruciform DNA, conferring on it an open structure. The RuvB hexamer acts as an ATP-dependent pump, pulling dsDNA into and through the RuvAB complex. HJ branch migration allows RuvC to scan DNA until it finds its consensus sequence, where it cleaves and resolves the cruciform DNA. This Streptococcus agalactiae serotype III (strain NEM316) protein is Holliday junction branch migration complex subunit RuvA.